The following is an 812-amino-acid chain: Phosphoenolpyruvate synthase (812 aa).

His-430 functions as the Tele-phosphohistidine intermediate in the catalytic mechanism. Residues Arg-520, Arg-588, Glu-690, Gly-711, Ser-712, Asn-713, and Asp-714 each contribute to the substrate site. Glu-690 provides a ligand contact to Mg(2+). Asp-714 contacts Mg(2+). The Proton donor role is filled by Cys-761.

It belongs to the PEP-utilizing enzyme family. Requires Mg(2+) as cofactor.

It catalyses the reaction pyruvate + ATP + H2O = phosphoenolpyruvate + AMP + phosphate + 2 H(+). The protein operates within carbohydrate biosynthesis; gluconeogenesis. In terms of biological role, catalyzes the phosphorylation of pyruvate to phosphoenolpyruvate. The protein is Phosphoenolpyruvate synthase (ppsA) of Helicobacter pylori (strain ATCC 700392 / 26695) (Campylobacter pylori).